We begin with the raw amino-acid sequence, 284 residues long: Deoxyribonuclease-1 (284 aa).

A signal peptide spans 1–22 (MRGARLMGALLALAGLLQGALA). An N-linked (GlcNAc...) asparagine glycan is attached at asparagine 40. Glutamate 100 is a catalytic residue. The cysteines at positions 123 and 126 are disulfide-linked. The N-linked (GlcNAc...) asparagine glycan is linked to asparagine 128. The active site involves histidine 156. The cysteines at positions 195 and 231 are disulfide-linked.

It belongs to the DNase I family. Ca(2+) serves as cofactor. Mg(2+) is required as a cofactor. In terms of tissue distribution, highest expression in pancreas.

The protein localises to the secreted. Its subcellular location is the zymogen granule. It is found in the nucleus envelope. The catalysed reaction is Endonucleolytic cleavage to 5'-phosphodinucleotide and 5'-phosphooligonucleotide end-products.. Serum endocuclease secreted into body fluids by a wide variety of exocrine and endocrine organs. Expressed by non-hematopoietic tissues and preferentially cleaves protein-free DNA. Among other functions, seems to be involved in cell death by apoptosis. Binds specifically to G-actin and blocks actin polymerization. Together with DNASE1L3, plays a key role in degrading neutrophil extracellular traps (NETs). NETs are mainly composed of DNA fibers and are released by neutrophils to bind pathogens during inflammation. Degradation of intravascular NETs by DNASE1 and DNASE1L3 is required to prevent formation of clots that obstruct blood vessels and cause organ damage following inflammation. The polypeptide is Deoxyribonuclease-1 (DNASE1) (Canis lupus familiaris (Dog)).